The chain runs to 125 residues: Barwin (125 aa).

A Pyrrolidone carboxylic acid modification is found at Q1. The Barwin domain occupies 1 to 125; that stretch reads QQANDVRATY…VNYQFVDCRD (125 aa). Intrachain disulfides connect C31–C63, C52–C86, and C66–C123.

Functionally, may be involved in a defense mechanism. Probable plant lectin. Binds weakly a chitin analog. This is Barwin from Hordeum vulgare (Barley).